Reading from the N-terminus, the 230-residue chain is Flagellar L-ring protein (230 aa).

The first 18 residues, 1-18 (MNRLNIAVSCLATALLFG), serve as a signal peptide directing secretion. The N-palmitoyl cysteine moiety is linked to residue cysteine 19. Residue cysteine 19 is the site of S-diacylglycerol cysteine attachment.

The protein belongs to the FlgH family. As to quaternary structure, the basal body constitutes a major portion of the flagellar organelle and consists of four rings (L,P,S, and M) mounted on a central rod.

The protein resides in the cell outer membrane. Its subcellular location is the bacterial flagellum basal body. In terms of biological role, assembles around the rod to form the L-ring and probably protects the motor/basal body from shearing forces during rotation. This chain is Flagellar L-ring protein, found in Legionella pneumophila (strain Corby).